Consider the following 216-residue polypeptide: Pyrophosphatase PpaX (216 aa).

Aspartate 9 acts as the Nucleophile in catalysis.

Belongs to the HAD-like hydrolase superfamily. PpaX family. Mg(2+) is required as a cofactor.

The enzyme catalyses diphosphate + H2O = 2 phosphate + H(+). Its function is as follows. Hydrolyzes pyrophosphate formed during P-Ser-HPr dephosphorylation by HPrK/P. Might play a role in controlling the intracellular pyrophosphate pool. The protein is Pyrophosphatase PpaX of Bacillus cereus (strain ATCC 10987 / NRS 248).